Here is a 518-residue protein sequence, read N- to C-terminus: Glutamate--cysteine ligase (518 aa).

Belongs to the glutamate--cysteine ligase type 1 family. Type 1 subfamily.

The enzyme catalyses L-cysteine + L-glutamate + ATP = gamma-L-glutamyl-L-cysteine + ADP + phosphate + H(+). It participates in sulfur metabolism; glutathione biosynthesis; glutathione from L-cysteine and L-glutamate: step 1/2. This chain is Glutamate--cysteine ligase, found in Citrobacter koseri (strain ATCC BAA-895 / CDC 4225-83 / SGSC4696).